The chain runs to 499 residues: Cytochrome P450 monooxygenase ausI (499 aa).

The helical transmembrane segment at 10-30 (PLGQPLIAGFVVVSAVLYLLY) threads the bilayer. Residue C439 coordinates heme. An N-linked (GlcNAc...) asparagine glycan is attached at N483.

The protein belongs to the cytochrome P450 family. Requires heme as cofactor.

The protein localises to the membrane. Its pathway is secondary metabolite biosynthesis; terpenoid biosynthesis. Functionally, cytochrome P450 monooxygenase; part of the gene cluster B that mediates the biosynthesis of austinol and dehydroaustinol, two fungal meroterpenoids. The first step of the pathway is the synthesis of 3,5-dimethylorsellinic acid by the polyketide synthase ausA. 3,5-dimethylorsellinic acid is then prenylated by the polyprenyl transferase ausN. Further epoxidation by the FAD-dependent monooxygenase ausM and cyclization by the probable terpene cyclase ausL lead to the formation of protoaustinoid A. Protoaustinoid A is then oxidized to spiro-lactone preaustinoid A3 by the combined action of the FAD-binding monooxygenases ausB and ausC, and the dioxygenase ausE. Acid-catalyzed keto-rearrangement and ring contraction of the tetraketide portion of preaustinoid A3 by ausJ lead to the formation of preaustinoid A4. The aldo-keto reductase ausK, with the help of ausH, is involved in the next step by transforming preaustinoid A4 into isoaustinone which is in turn hydroxylated by the P450 monooxygenase ausI to form austinolide. Finally, the cytochrome P450 monooxygenase ausG modifies austinolide to austinol. Austinol can be further modified to dehydroaustinol which forms a diffusible complex with diorcinol that initiates conidiation. Due to genetic rearrangements of the clusters and the subsequent loss of some enzymes, the end products of the Emericella nidulans austinoid biosynthesis clusters are austinol and dehydroaustinol, even if additional enzymes, such as the O-acetyltransferase ausQ and the cytochrome P450 monooxygenase ausR are still functional. This chain is Cytochrome P450 monooxygenase ausI, found in Emericella nidulans (strain FGSC A4 / ATCC 38163 / CBS 112.46 / NRRL 194 / M139) (Aspergillus nidulans).